The primary structure comprises 81 residues: Sec-independent protein translocase protein TatA (81 aa).

Residues 1–21 (MGGISIWQLLIVALIVILLFG) form a helical membrane-spanning segment. Residues 34–81 (GAVKGFKNAMTPEDENKSLDDKEKDQTAATSQQAAEKQPETESKDKQA) form a disordered region. 2 stretches are compositionally biased toward basic and acidic residues: residues 47 to 59 (DENK…EKDQ) and 70 to 81 (KQPETESKDKQA).

It belongs to the TatA/E family. In terms of assembly, the Tat system comprises two distinct complexes: a TatABC complex, containing multiple copies of TatA, TatB and TatC subunits, and a separate TatA complex, containing only TatA subunits. Substrates initially bind to the TatABC complex, which probably triggers association of the separate TatA complex to form the active translocon.

It localises to the cell inner membrane. Functionally, part of the twin-arginine translocation (Tat) system that transports large folded proteins containing a characteristic twin-arginine motif in their signal peptide across membranes. TatA could form the protein-conducting channel of the Tat system. The polypeptide is Sec-independent protein translocase protein TatA (Shewanella frigidimarina (strain NCIMB 400)).